The sequence spans 348 residues: LRP2-binding protein (348 aa).

The stretch at 60–93 (TLAYFLRGQLYFEEGWYEEALEQFEEIEEKDHQA) is one TPR repeat. Sel1-like repeat units follow at residues 94–126 (TYQLGVMYYDGLGTILNSEKGVDYMKKILDSPC), 134–169 (FAAAYNLGRAYYEGKGVKRSNEEAERLWLFAADNGN), 174–207 (VKAQSMLGLYYSTKEPKELEKAFYWHSEACGNGN), 208–243 (LESQGALGLMYLYGQGIRQDTEAALHCLREAAERGN), 244–278 (VYAQGNLVEYYYKMKFFTKCVAFSKRIADYDEVHD), and 298–333 (AMASFYHARCLQLGLGITRDEATAKHYYSKACRLNP).

Interacts with LRP2.

The protein resides in the cytoplasm. Its function is as follows. May act as an adapter that regulates LRP2 function. The sequence is that of LRP2-binding protein (LRP2BP) from Macaca fascicularis (Crab-eating macaque).